A 105-amino-acid chain; its full sequence is Cell division protein FtsB (105 aa).

At Met1–Pro3 the chain is on the cytoplasmic side. A helical transmembrane segment spans residues Phe4 to Phe21. Over Gly22–Gln105 the chain is Periplasmic. Residues His38–Leu75 are a coiled coil.

Belongs to the FtsB family. As to quaternary structure, part of a complex composed of FtsB, FtsL and FtsQ.

The protein localises to the cell inner membrane. Essential cell division protein. May link together the upstream cell division proteins, which are predominantly cytoplasmic, with the downstream cell division proteins, which are predominantly periplasmic. The polypeptide is Cell division protein FtsB (Shewanella amazonensis (strain ATCC BAA-1098 / SB2B)).